The chain runs to 493 residues: Chromosomal replication initiator protein DnaA (493 aa).

A domain I, interacts with DnaA modulators region spans residues 1–105 (MSDTIQQEAP…LMYSIVIDKS (105 aa)). Positions 105-152 (SQGQPVTIELPHQIDAAPAERSVRPEAPGQKASAERERLEIARPRFES) are domain II. Positions 121-140 (APAERSVRPEAPGQKASAER) are disordered. A domain III, AAA+ region region spans residues 153 to 370 (NLNPKYTFST…GCIVKLLAAH (218 aa)). ATP-binding residues include G198, G200, K201, and T202. A domain IV, binds dsDNA region spans residues 371 to 493 (SLDNQEIDLQ…LRKRIEIMSM (123 aa)).

Belongs to the DnaA family. As to quaternary structure, oligomerizes as a right-handed, spiral filament on DNA at oriC.

The protein resides in the cytoplasm. Its function is as follows. Plays an essential role in the initiation and regulation of chromosomal replication. ATP-DnaA binds to the origin of replication (oriC) to initiate formation of the DNA replication initiation complex once per cell cycle. Binds the DnaA box (a 9 base pair repeat at the origin) and separates the double-stranded (ds)DNA. Forms a right-handed helical filament on oriC DNA; dsDNA binds to the exterior of the filament while single-stranded (ss)DNA is stabiized in the filament's interior. The ATP-DnaA-oriC complex binds and stabilizes one strand of the AT-rich DNA unwinding element (DUE), permitting loading of DNA polymerase. After initiation quickly degrades to an ADP-DnaA complex that is not apt for DNA replication. Binds acidic phospholipids. This Chlorobaculum tepidum (strain ATCC 49652 / DSM 12025 / NBRC 103806 / TLS) (Chlorobium tepidum) protein is Chromosomal replication initiator protein DnaA.